A 316-amino-acid chain; its full sequence is Ferrochelatase (316 aa).

Residues histidine 188 and glutamate 269 each coordinate Fe cation.

The protein belongs to the ferrochelatase family.

It is found in the cytoplasm. The catalysed reaction is heme b + 2 H(+) = protoporphyrin IX + Fe(2+). It functions in the pathway porphyrin-containing compound metabolism; protoheme biosynthesis; protoheme from protoporphyrin-IX: step 1/1. Its function is as follows. Catalyzes the ferrous insertion into protoporphyrin IX. This Wolinella succinogenes (strain ATCC 29543 / DSM 1740 / CCUG 13145 / JCM 31913 / LMG 7466 / NCTC 11488 / FDC 602W) (Vibrio succinogenes) protein is Ferrochelatase.